A 98-amino-acid chain; its full sequence is Large ribosomal subunit protein uL23 (98 aa).

Belongs to the universal ribosomal protein uL23 family. As to quaternary structure, part of the 50S ribosomal subunit. Contacts protein L29, and trigger factor when it is bound to the ribosome.

Functionally, one of the early assembly proteins it binds 23S rRNA. One of the proteins that surrounds the polypeptide exit tunnel on the outside of the ribosome. Forms the main docking site for trigger factor binding to the ribosome. The chain is Large ribosomal subunit protein uL23 from Methylobacterium sp. (strain 4-46).